A 583-amino-acid chain; its full sequence is Asparagine synthetase, root [glutamine-hydrolyzing] (583 aa).

The active-site For GATase activity is C2. The 184-residue stretch at 2–185 folds into the Glutamine amidotransferase type-2 domain; that stretch reads CGILAVLGCS…PGHLYSSKDS (184 aa). L-glutamine-binding positions include 50–54, 75–77, and D98; these read RLAIV and NGE. ATP-binding positions include L231, V267, and 341–342; that span reads SG. The region spanning 237 to 516 is the Asparagine synthetase domain; it reads DSSLVASITS…PQNSARLTVP (280 aa).

As to expression, roots.

It catalyses the reaction L-aspartate + L-glutamine + ATP + H2O = L-asparagine + L-glutamate + AMP + diphosphate + H(+). Its pathway is amino-acid biosynthesis; L-asparagine biosynthesis; L-asparagine from L-aspartate (L-Gln route): step 1/1. In Pisum sativum (Garden pea), this protein is Asparagine synthetase, root [glutamine-hydrolyzing] (AS2).